A 485-amino-acid chain; its full sequence is Glutamyl-tRNA(Gln) amidotransferase subunit A (485 aa).

Active-site charge relay system residues include Lys79 and Ser154. Ser178 acts as the Acyl-ester intermediate in catalysis.

It belongs to the amidase family. GatA subfamily. As to quaternary structure, heterotrimer of A, B and C subunits.

The enzyme catalyses L-glutamyl-tRNA(Gln) + L-glutamine + ATP + H2O = L-glutaminyl-tRNA(Gln) + L-glutamate + ADP + phosphate + H(+). Its function is as follows. Allows the formation of correctly charged Gln-tRNA(Gln) through the transamidation of misacylated Glu-tRNA(Gln) in organisms which lack glutaminyl-tRNA synthetase. The reaction takes place in the presence of glutamine and ATP through an activated gamma-phospho-Glu-tRNA(Gln). The protein is Glutamyl-tRNA(Gln) amidotransferase subunit A of Staphylococcus aureus (strain MW2).